The chain runs to 87 residues: DNA-directed RNA polymerase subunit omega (87 aa).

This sequence belongs to the RNA polymerase subunit omega family. The RNAP catalytic core consists of 2 alpha, 1 beta, 1 beta' and 1 omega subunit. When a sigma factor is associated with the core the holoenzyme is formed, which can initiate transcription.

It carries out the reaction RNA(n) + a ribonucleoside 5'-triphosphate = RNA(n+1) + diphosphate. In terms of biological role, promotes RNA polymerase assembly. Latches the N- and C-terminal regions of the beta' subunit thereby facilitating its interaction with the beta and alpha subunits. In Azotobacter vinelandii (strain DJ / ATCC BAA-1303), this protein is DNA-directed RNA polymerase subunit omega.